Consider the following 82-residue polypeptide: Small ribosomal subunit protein uS12 (82 aa).

Residue Asp-59 is modified to 3-methylthioaspartic acid.

This sequence belongs to the universal ribosomal protein uS12 family. In terms of assembly, part of the 30S ribosomal subunit. Contacts proteins S8 and S17. May interact with IF1 in the 30S initiation complex.

In terms of biological role, with S4 and S5 plays an important role in translational accuracy. Its function is as follows. Interacts with and stabilizes bases of the 16S rRNA that are involved in tRNA selection in the A site and with the mRNA backbone. Located at the interface of the 30S and 50S subunits, it traverses the body of the 30S subunit contacting proteins on the other side and probably holding the rRNA structure together. The combined cluster of proteins S8, S12 and S17 appears to hold together the shoulder and platform of the 30S subunit. This Actinobacillus pleuropneumoniae (Haemophilus pleuropneumoniae) protein is Small ribosomal subunit protein uS12 (rpsL).